The following is a 99-amino-acid chain: uncharacterized protein (99 aa).

A run of 3 helical transmembrane segments spans residues 7 to 29 (FFIS…YTLY), 39 to 61 (FISS…ARYN), and 68 to 90 (FCNL…LWLL).

It localises to the cell membrane. This is an uncharacterized protein from Archaeoglobus fulgidus (strain ATCC 49558 / DSM 4304 / JCM 9628 / NBRC 100126 / VC-16).